We begin with the raw amino-acid sequence, 317 residues long: MKVLWAALLVTFLAGCQAKVEQAVETEPEPELHQQAEWQSGQRWELALGRFWDYLRWVQTLSEQVQEELLSSQVTQELTALMDETMKELKAYKSELEEQLTPVAEETRARLSKELQAAQARLGADMEDVRGRLAQYRGEVQAMLGQSTEELRARLASHLRKLRKRLLRDADDLQKRLAVYQAGAREGAERGVSAIRERLGPLVEQGRVRAATVGSLAGQPLQERAQAWGERLRARMEEMGSRTRDRLDEVKEQVAEVRAKLEEQAQQIRLQAEAFQARLKSWFEPLVEDMQRQWAGLVEKVQAAMGTSAAPVPSDNH.

The first 18 residues, 1 to 18 (MKVLWAALLVTFLAGCQA), serve as a signal peptide directing secretion. 8 consecutive repeat copies span residues 80–101 (ALMDETMKELKAYKSELEEQLT), 102–123 (PVAEETRARLSKELQAAQARLG), 124–145 (ADMEDVRGRLAQYRGEVQAMLG), 146–167 (QSTEELRARLASHLRKLRKRLL), 168–189 (RDADDLQKRLAVYQAGAREGAE), 190–211 (RGVSAIRERLGPLVEQGRVRAA), 212–233 (TVGSLAGQPLQERAQAWGERLR), and 234–255 (ARMEEMGSRTRDRLDEVKEQVA). Residues 80 to 255 (ALMDETMKEL…RLDEVKEQVA (176 aa)) form an 8 X 22 AA approximate tandem repeats region. Methionine 143 carries the methionine sulfoxide modification. Serine 147 is modified (phosphoserine). The segment at 158 to 168 (HLRKLRKRLLR) is LDL and other lipoprotein receptors binding. 162–165 (LRKR) serves as a coordination point for heparin. The segment at 210–290 (AATVGSLAGQ…SWFEPLVEDM (81 aa)) is lipid-binding and lipoprotein association. Residue 229 to 236 (GERLRARM) participates in heparin binding. The tract at residues 266–317 (QQIRLQAEAFQARLKSWFEPLVEDMQRQWAGLVEKVQAAMGTSAAPVPSDNH) is homooligomerization. The segment at 278–290 (RLKSWFEPLVEDM) is specificity for association with VLDL.

Belongs to the apolipoprotein A1/A4/E family. In terms of assembly, homotetramer. May interact with ABCA1; functionally associated with ABCA1 in the biogenesis of HDLs. May interact with APP/A4 amyloid-beta peptide; the interaction is extremely stable in vitro but its physiological significance is unclear. May interact with MAPT. May interact with MAP2. In the cerebrospinal fluid, interacts with secreted SORL1. Interacts with PMEL; this allows the loading of PMEL luminal fragment on ILVs to induce fibril nucleation. In terms of processing, APOE exists as multiple glycosylated and sialylated glycoforms within cells and in plasma. The extent of glycosylation and sialylation are tissue and context specific. Post-translationally, glycated in plasma VLDL. Phosphorylated by FAM20C in the extracellular medium.

It localises to the secreted. The protein resides in the extracellular space. It is found in the extracellular matrix. The protein localises to the extracellular vesicle. Its subcellular location is the endosome. It localises to the multivesicular body. Functionally, APOE is an apolipoprotein, a protein associating with lipid particles, that mainly functions in lipoprotein-mediated lipid transport between organs via the plasma and interstitial fluids. APOE is a core component of plasma lipoproteins and is involved in their production, conversion and clearance. Apolipoproteins are amphipathic molecules that interact both with lipids of the lipoprotein particle core and the aqueous environment of the plasma. As such, APOE associates with chylomicrons, chylomicron remnants, very low density lipoproteins (VLDL) and intermediate density lipoproteins (IDL) but shows a preferential binding to high-density lipoproteins (HDL). It also binds a wide range of cellular receptors including the LDL receptor/LDLR, the LDL receptor-related proteins LRP1, LRP2 and LRP8 and the very low-density lipoprotein receptor/VLDLR that mediate the cellular uptake of the APOE-containing lipoprotein particles. Finally, APOE also has a heparin-binding activity and binds heparan-sulfate proteoglycans on the surface of cells, a property that supports the capture and the receptor-mediated uptake of APOE-containing lipoproteins by cells. A main function of APOE is to mediate lipoprotein clearance through the uptake of chylomicrons, VLDLs, and HDLs by hepatocytes. APOE is also involved in the biosynthesis by the liver of VLDLs as well as their uptake by peripheral tissues ensuring the delivery of triglycerides and energy storage in muscle, heart and adipose tissues. By participating in the lipoprotein-mediated distribution of lipids among tissues, APOE plays a critical role in plasma and tissues lipid homeostasis. APOE is also involved in two steps of reverse cholesterol transport, the HDLs-mediated transport of cholesterol from peripheral tissues to the liver, and thereby plays an important role in cholesterol homeostasis. First, it is functionally associated with ABCA1 in the biogenesis of HDLs in tissues. Second, it is enriched in circulating HDLs and mediates their uptake by hepatocytes. APOE also plays an important role in lipid transport in the central nervous system, regulating neuron survival and sprouting. The protein is Apolipoprotein E (APOE) of Gorilla gorilla gorilla (Western lowland gorilla).